We begin with the raw amino-acid sequence, 398 residues long: Acetate kinase 1 (398 aa).

Asn-10 contacts Mg(2+). Lys-17 is a binding site for ATP. Position 89 (Arg-89) interacts with substrate. Asp-146 serves as the catalytic Proton donor/acceptor. Residues 206–210 (HLGNG), 281–283 (DCR), and 329–333 (GIGEN) contribute to the ATP site. Glu-384 provides a ligand contact to Mg(2+).

This sequence belongs to the acetokinase family. In terms of assembly, homodimer. Mg(2+) serves as cofactor. Requires Mn(2+) as cofactor.

The protein resides in the cytoplasm. The catalysed reaction is acetate + ATP = acetyl phosphate + ADP. The protein operates within metabolic intermediate biosynthesis; acetyl-CoA biosynthesis; acetyl-CoA from acetate: step 1/2. Catalyzes the formation of acetyl phosphate from acetate and ATP. Can also catalyze the reverse reaction. The polypeptide is Acetate kinase 1 (Neisseria meningitidis serogroup A / serotype 4A (strain DSM 15465 / Z2491)).